Here is a 219-residue protein sequence, read N- to C-terminus: Large ribosomal subunit protein uL29m (219 aa).

The tract at residues 77–97 is disordered; sequence ASKYPLPKPVSPEKLEKREST. Basic and acidic residues predominate over residues 87-97; sequence SPEKLEKREST.

The protein belongs to the universal ribosomal protein uL29 family. As to quaternary structure, component of the mitochondrial large ribosomal subunit. Mature mitochondrial ribosomes consist of a small (37S) and a large (54S) subunit. The 37S subunit contains at least 33 different proteins and 1 molecule of RNA (15S). The 54S subunit contains at least 45 different proteins and 1 molecule of RNA (21S).

The protein resides in the mitochondrion. In Emericella nidulans (strain FGSC A4 / ATCC 38163 / CBS 112.46 / NRRL 194 / M139) (Aspergillus nidulans), this protein is Large ribosomal subunit protein uL29m (mrpl4).